Consider the following 178-residue polypeptide: Nucleoside-triphosphatase THEP1 (178 aa).

ATP-binding positions include 9-16 and 101-108; these read GPVGSIKA and VIIIDEVG.

The protein belongs to the THEP1 NTPase family.

It carries out the reaction a ribonucleoside 5'-triphosphate + H2O = a ribonucleoside 5'-diphosphate + phosphate + H(+). Has nucleotide phosphatase activity towards ATP, GTP, CTP, TTP and UTP. May hydrolyze nucleoside diphosphates with lower efficiency. In Thermoplasma volcanium (strain ATCC 51530 / DSM 4299 / JCM 9571 / NBRC 15438 / GSS1), this protein is Nucleoside-triphosphatase THEP1.